Consider the following 459-residue polypeptide: V-type ATP synthase beta chain (459 aa).

The protein belongs to the ATPase alpha/beta chains family.

Functionally, produces ATP from ADP in the presence of a proton gradient across the membrane. The V-type beta chain is a regulatory subunit. The sequence is that of V-type ATP synthase beta chain from Clostridium botulinum (strain Alaska E43 / Type E3).